The following is a 61-amino-acid chain: Defensin-like peptide TXKs2 (61 aa).

Positions M1–S19 are cleaved as a signal peptide. Residues N20–V22 constitute a propeptide that is removed on maturation. Cystine bridges form between C26/C47, C33/C56, and C37/C58.

It belongs to the invertebrate defensin family. As to expression, expressed by the venom gland.

It localises to the secreted. Functionally, antibacterial protein. The chain is Defensin-like peptide TXKs2 from Olivierus martensii (Manchurian scorpion).